Consider the following 649-residue polypeptide: Leucine-rich repeat transmembrane protein FLRT3 (649 aa).

The N-terminal stretch at 1–28 is a signal peptide; sequence MISPAWSIFLIGTKIGLFLQVAPLSVMA. The LRRNT domain occupies 29–58; it reads KSCPSVCRCDAGFIYCNDRFLTSIPTGIPE. The Extracellular segment spans residues 29–528; it reads KSCPSVCRCD…KEPYKNPNLP (500 aa). Cystine bridges form between cysteine 31–cysteine 37 and cysteine 35–cysteine 44. The segment at 38–67 is interaction with ADGRL3; it reads DAGFIYCNDRFLTSIPTGIPEDATTLYLQN. LRR repeat units lie at residues 59–80, 84–104, 105–126, 129–150, 155–176, 177–197, 200–220, 226–247, 248–269, and 272–293; these read DATT…SDLK, KVER…NLPK, YVKE…SLSK, YLEE…EGAF, YLRL…LPRT, IEEL…SLQG, SLKR…GDKV, NLTE…LPGT, NLRK…AFSY, and QLYR…IFDD. N-linked (GlcNAc...) asparagine glycosylation is present at asparagine 226. Asparagine 282 and asparagine 296 each carry an N-linked (GlcNAc...) asparagine glycan. One can recognise an LRRCT domain in the interval 305–357; sequence NPWYCGCKMKWVRDWLQSLPVKVNVRGLMCQAPEKVRGMAIKDLNAELFDCKD. Cysteines 309 and 334 form a disulfide. A disordered region spans residues 385–407; it reads VTKQPDIKNPKLTKDHQTTGSPS. Basic and acidic residues predominate over residues 389–401; that stretch reads PDIKNPKLTKDHQ. The 96-residue stretch at 409-504 folds into the Fibronectin type-III domain; the sequence is KTITITVKSV…VCIETETAPL (96 aa). Residues 529-549 traverse the membrane as a helical segment; sequence LAAIIGGAVALVTIALLALVC. The Cytoplasmic portion of the chain corresponds to 550–649; sequence WYVHRNGSLF…GIPDSDHSHS (100 aa). A disordered region spans residues 622-649; that stretch reads LYKNNHSESSSNRSYRDSGIPDSDHSHS.

In terms of assembly, monomer and homodimer. Self-associates (via leucine-rich repeats), giving rise to homooligomers. Interacts with FGFR1. Interacts (via extracellular domain) with ADGRL1/LPHN1 and LPHN2 (via olfactomedin-like domain). Interacts (via extracellular domain) with ADGRL3 (via olfactomedin-like domain); the interaction is direct. Interacts (via extracellular domain) with UNC5B and UNC5D (via extracellular domain); the interaction is direct. Identified in complexes composed of FLRT3, ADGRL3 and UNC5B, respectively FLRT3, ADGRL3 and UNC5D. May also interact (via extracellular domain) with UNC5A and UNC5C. Interacts (via cytoplasmic domain) with ROBO1. Post-translationally, N-glycosylated. Proteolytic cleavage in the juxtamembrane region gives rise to a soluble ectodomain. Cleavage is probably effected by a metalloprotease.

It localises to the cell membrane. The protein resides in the presynaptic cell membrane. The protein localises to the endoplasmic reticulum membrane. It is found in the cell junction. Its subcellular location is the focal adhesion. It localises to the secreted. The protein resides in the cell projection. The protein localises to the axon. It is found in the growth cone membrane. Its function is as follows. Functions in cell-cell adhesion, cell migration and axon guidance, exerting an attractive or repulsive role depending on its interaction partners. Plays a role in the spatial organization of brain neurons. Plays a role in vascular development in the retina. Plays a role in cell-cell adhesion via its interaction with ADGRL3 and probably also other latrophilins that are expressed at the surface of adjacent cells. Interaction with the intracellular domain of ROBO1 mediates axon attraction towards cells expressing NTN1. Mediates axon growth cone collapse and plays a repulsive role in neuron guidance via its interaction with UNC5B, and possibly also other UNC-5 family members. Promotes neurite outgrowth (in vitro). Mediates cell-cell contacts that promote an increase both in neurite number and in neurite length. Plays a role in the regulation of the density of glutamaergic synapses. Plays a role in fibroblast growth factor-mediated signaling cascades. Required for normal morphogenesis during embryonic development, but not for normal embryonic patterning. Required for normal ventral closure, headfold fusion and definitive endoderm migration during embryonic development. Required for the formation of a normal basement membrane and the maintenance of a normal anterior visceral endoderm during embryonic development. The chain is Leucine-rich repeat transmembrane protein FLRT3 (FLRT3) from Pongo abelii (Sumatran orangutan).